Reading from the N-terminus, the 188-residue chain is Protein TIFY 9 (188 aa).

The disordered stretch occupies residues 20-41 (DADDRHAKSGGSSASSSSSIRG). The segment covering 28–38 (SGGSSASSSSS) has biased composition (low complexity). Residues 80–114 (AAAAAAPMTLFYNGSVAVFDVSHDKAEAIMRMATE) enclose the Tify domain. A Jas motif is present at residues 135–160 (PLTRTKSLQRFLSKRKERLTSLGPYQ). Positions 156–188 (LGPYQVGGPAAVGATTSTTTKSFLAKEEEHTAS) are disordered. The span at 179–188 (LAKEEEHTAS) shows a compositional bias: basic and acidic residues.

The protein belongs to the TIFY/JAZ family. Interacts with COI1A and COI2 in a coronatine-dependent manner. Coronatine is an analog of jasmonoyl isoleucine (JA-Ile). Post-translationally, ubiquitinated. Targeted for degradation by the SCF(COI1) E3 ubiquitin ligase-proteasome pathway during jasmonate signaling.

Functionally, repressor of jasmonate responses. The polypeptide is Protein TIFY 9 (Oryza sativa subsp. japonica (Rice)).